A 64-amino-acid chain; its full sequence is Conotoxin Cal6.24 (64 aa).

The signal sequence occupies residues 1 to 22; it reads MKLTCVMIVAVLVLTVCKVVTS. Disulfide bonds link C32–C50, C40–C54, and C49–C60.

As to expression, expressed by the venom duct.

Its subcellular location is the secreted. In terms of biological role, probable neurotoxin. The sequence is that of Conotoxin Cal6.24 from Californiconus californicus (California cone).